Here is a 368-residue protein sequence, read N- to C-terminus: Phosphate acyltransferase (368 aa).

The disordered stretch occupies residues 334-368 (EGSLEQAARDASGAGHASPIAGQPAEPYAAQSSKA).

It belongs to the PlsX family. In terms of assembly, homodimer. Probably interacts with PlsY.

Its subcellular location is the cytoplasm. The enzyme catalyses a fatty acyl-[ACP] + phosphate = an acyl phosphate + holo-[ACP]. It participates in lipid metabolism; phospholipid metabolism. In terms of biological role, catalyzes the reversible formation of acyl-phosphate (acyl-PO(4)) from acyl-[acyl-carrier-protein] (acyl-ACP). This enzyme utilizes acyl-ACP as fatty acyl donor, but not acyl-CoA. This Paraburkholderia xenovorans (strain LB400) protein is Phosphate acyltransferase.